Consider the following 376-residue polypeptide: MYKLLKKSGKARRGEFTTPHGVIQTPVFMNVGTLAAIKGAVSSMDLKEIGCQVELSNTYHLHLRPGDEVVKKMGGLHKFMNWDRPILTDSGGFQVFSLSKIRKIQEEGVYFNSHIDGRKIFMGPEESMRIQSNLASTIAMAFDECVENPAPREYVEKSVERTTRWLHRCKDEMNRLNSLPDTINNKQMLFGINQGGTYEDIRIEHAKTIAKMDLDGYAIGGLAVGESHEDMYRIIDAVVPHLPEDKPIYLMGVGIPSNILEAVDRGVDFFDCVLPARNGRHAHVFTKEGKINLLNAKFELDDRPIDEGCQCPACKHYTRSYIRHLFKAKEMLAMRLCVLHNLYFYNNLMEEIRDAIDGNYFKEYKERKLKEWGGRA.

Asp-89 functions as the Proton acceptor in the catalytic mechanism. Substrate contacts are provided by residues 89 to 93 (DSGGF), Asp-143, Gln-194, and Gly-221. Residues 252–258 (GVGIPSN) are RNA binding. The active-site Nucleophile is Asp-271. The segment at 276 to 280 (ARNGR) is RNA binding; important for wobble base 34 recognition. Positions 309, 311, 314, and 340 each coordinate Zn(2+).

This sequence belongs to the queuine tRNA-ribosyltransferase family. Homodimer. Within each dimer, one monomer is responsible for RNA recognition and catalysis, while the other monomer binds to the replacement base PreQ1. Requires Zn(2+) as cofactor.

The enzyme catalyses 7-aminomethyl-7-carbaguanine + guanosine(34) in tRNA = 7-aminomethyl-7-carbaguanosine(34) in tRNA + guanine. It functions in the pathway tRNA modification; tRNA-queuosine biosynthesis. Functionally, catalyzes the base-exchange of a guanine (G) residue with the queuine precursor 7-aminomethyl-7-deazaguanine (PreQ1) at position 34 (anticodon wobble position) in tRNAs with GU(N) anticodons (tRNA-Asp, -Asn, -His and -Tyr). Catalysis occurs through a double-displacement mechanism. The nucleophile active site attacks the C1' of nucleotide 34 to detach the guanine base from the RNA, forming a covalent enzyme-RNA intermediate. The proton acceptor active site deprotonates the incoming PreQ1, allowing a nucleophilic attack on the C1' of the ribose to form the product. After dissociation, two additional enzymatic reactions on the tRNA convert PreQ1 to queuine (Q), resulting in the hypermodified nucleoside queuosine (7-(((4,5-cis-dihydroxy-2-cyclopenten-1-yl)amino)methyl)-7-deazaguanosine). The sequence is that of Queuine tRNA-ribosyltransferase from Clostridium botulinum (strain Hall / ATCC 3502 / NCTC 13319 / Type A).